Consider the following 701-residue polypeptide: Ribosomal RNA large subunit methyltransferase K/L (701 aa).

The THUMP domain maps to 43–154; sequence LLYQSLMWSR…KETAHISLDL (112 aa).

Belongs to the methyltransferase superfamily. RlmKL family.

The protein resides in the cytoplasm. The catalysed reaction is guanosine(2445) in 23S rRNA + S-adenosyl-L-methionine = N(2)-methylguanosine(2445) in 23S rRNA + S-adenosyl-L-homocysteine + H(+). It carries out the reaction guanosine(2069) in 23S rRNA + S-adenosyl-L-methionine = N(2)-methylguanosine(2069) in 23S rRNA + S-adenosyl-L-homocysteine + H(+). Functionally, specifically methylates the guanine in position 2445 (m2G2445) and the guanine in position 2069 (m7G2069) of 23S rRNA. The chain is Ribosomal RNA large subunit methyltransferase K/L from Klebsiella pneumoniae (strain 342).